Reading from the N-terminus, the 292-residue chain is Ribosomal RNA small subunit methyltransferase A (292 aa).

The S-adenosyl-L-methionine site is built by Asn-28, Leu-30, Gly-55, Glu-76, Asp-101, and Asn-126.

The protein belongs to the class I-like SAM-binding methyltransferase superfamily. rRNA adenine N(6)-methyltransferase family. RsmA subfamily.

It is found in the cytoplasm. It carries out the reaction adenosine(1518)/adenosine(1519) in 16S rRNA + 4 S-adenosyl-L-methionine = N(6)-dimethyladenosine(1518)/N(6)-dimethyladenosine(1519) in 16S rRNA + 4 S-adenosyl-L-homocysteine + 4 H(+). Its function is as follows. Specifically dimethylates two adjacent adenosines (A1518 and A1519) in the loop of a conserved hairpin near the 3'-end of 16S rRNA in the 30S particle. May play a critical role in biogenesis of 30S subunits. The polypeptide is Ribosomal RNA small subunit methyltransferase A (Bacillus mycoides (strain KBAB4) (Bacillus weihenstephanensis)).